We begin with the raw amino-acid sequence, 189 residues long: Potassium-transporting ATPase KdpC subunit (189 aa).

Residues 10–30 (LTLVFCVFFSVCYILVLWIFA) form a helical membrane-spanning segment.

Belongs to the KdpC family. The system is composed of three essential subunits: KdpA, KdpB and KdpC.

The protein localises to the cell inner membrane. In terms of biological role, part of the high-affinity ATP-driven potassium transport (or Kdp) system, which catalyzes the hydrolysis of ATP coupled with the electrogenic transport of potassium into the cytoplasm. This subunit acts as a catalytic chaperone that increases the ATP-binding affinity of the ATP-hydrolyzing subunit KdpB by the formation of a transient KdpB/KdpC/ATP ternary complex. The polypeptide is Potassium-transporting ATPase KdpC subunit (Phocaeicola vulgatus (strain ATCC 8482 / DSM 1447 / JCM 5826 / CCUG 4940 / NBRC 14291 / NCTC 11154) (Bacteroides vulgatus)).